Consider the following 384-residue polypeptide: Alpha-2B adrenergic receptor (384 aa).

A helical membrane pass occupies residues 1–25; the sequence is AIAAVTTFLILFTVFGNALVILAVL. The Cytoplasmic segment spans residues 26 to 36; that stretch reads TSRSLRAPQNL. The helical transmembrane segment at 37 to 62 threads the bilayer; that stretch reads FLVSLAAADILVATLIXPFSLANELL. The Extracellular portion of the chain corresponds to 63-72; that stretch reads GYWYFWHTWC. An intrachain disulfide couples cysteine 72 to cysteine 151. The chain crosses the membrane as a helical span at residues 73–95; sequence EVYLALXVLXCTSSIVHLCAISL. Residues 96 to 117 lie on the Cytoplasmic side of the membrane; the sequence is DRYWAVSRALEYNSKRTPRRIX. A helical transmembrane segment spans residues 118-140; it reads GIILTVWLIAAAISLPPLIYKGD. At 141–156 the chain is on the extracellular side; the sequence is QGPQPHGRPQCRLNQE. Residues 157–180 form a helical membrane-spanning segment; the sequence is AWYILSSSIGSFFAPCLIMILVYL. Residues 181–348 lie on the Cytoplasmic side of the membrane; sequence RIYLIAKRRN…LTREKRFTFV (168 aa). A disordered region spans residues 193-306; it reads GPRAQGASKG…SXGSPQLQQP (114 aa). Residues 288–306 show a composition bias toward low complexity; the sequence is PEALPASPASXGSPQLQQP. A helical membrane pass occupies residues 349–372; that stretch reads LAVVIGVXVLCWFPFFXSYSLGAI. Topologically, residues 373 to 381 are extracellular; the sequence is CPQHCTVXH. The chain crosses the membrane as a helical span at residues 382-384; that stretch reads GLF.

It belongs to the G-protein coupled receptor 1 family. Adrenergic receptor subfamily. ADRA2B sub-subfamily. In terms of assembly, interacts with RAB26. Interacts with PPP1R9B. Interacts with GGA1, GGA2 and GGA3.

The protein resides in the cell membrane. Alpha-2 adrenergic receptors mediate the catecholamine-induced inhibition of adenylate cyclase through the action of G proteins. The sequence is that of Alpha-2B adrenergic receptor (ADRA2B) from Echinops telfairi (Lesser hedgehog tenrec).